Reading from the N-terminus, the 148-residue chain is Large ribosomal subunit protein bL9 (148 aa).

Belongs to the bacterial ribosomal protein bL9 family.

Its function is as follows. Binds to the 23S rRNA. This Syntrophobacter fumaroxidans (strain DSM 10017 / MPOB) protein is Large ribosomal subunit protein bL9.